A 121-amino-acid chain; its full sequence is Large ribosomal subunit protein uL22c (121 aa).

The protein belongs to the universal ribosomal protein uL22 family. As to quaternary structure, part of the 50S ribosomal subunit.

It localises to the plastid. The protein resides in the chloroplast. Functionally, this protein binds specifically to 23S rRNA. Its function is as follows. The globular domain of the protein is located near the polypeptide exit tunnel on the outside of the subunit, while an extended beta-hairpin is found that lines the wall of the exit tunnel in the center of the 70S ribosome. The polypeptide is Large ribosomal subunit protein uL22c (rpl22) (Guillardia theta (Cryptophyte)).